Here is a 130-residue protein sequence, read N- to C-terminus: Small ribosomal subunit protein uS9 (130 aa).

This sequence belongs to the universal ribosomal protein uS9 family.

The protein is Small ribosomal subunit protein uS9 of Pseudoalteromonas atlantica (strain T6c / ATCC BAA-1087).